The following is a 484-amino-acid chain: Protein nucleotidyltransferase YdiU (484 aa).

Positions 87, 89, 90, 110, 122, 123, 173, and 180 each coordinate ATP. The active-site Proton acceptor is aspartate 249. Residues asparagine 250 and aspartate 259 each coordinate Mg(2+). Aspartate 259 contacts ATP. Positions 463–484 (EQEKYAELPPPSDRPYRTFCGT) are disordered.

Belongs to the SELO family. Mg(2+) is required as a cofactor. It depends on Mn(2+) as a cofactor.

The catalysed reaction is L-seryl-[protein] + ATP = 3-O-(5'-adenylyl)-L-seryl-[protein] + diphosphate. The enzyme catalyses L-threonyl-[protein] + ATP = 3-O-(5'-adenylyl)-L-threonyl-[protein] + diphosphate. It carries out the reaction L-tyrosyl-[protein] + ATP = O-(5'-adenylyl)-L-tyrosyl-[protein] + diphosphate. It catalyses the reaction L-histidyl-[protein] + UTP = N(tele)-(5'-uridylyl)-L-histidyl-[protein] + diphosphate. The catalysed reaction is L-seryl-[protein] + UTP = O-(5'-uridylyl)-L-seryl-[protein] + diphosphate. The enzyme catalyses L-tyrosyl-[protein] + UTP = O-(5'-uridylyl)-L-tyrosyl-[protein] + diphosphate. Nucleotidyltransferase involved in the post-translational modification of proteins. It can catalyze the addition of adenosine monophosphate (AMP) or uridine monophosphate (UMP) to a protein, resulting in modifications known as AMPylation and UMPylation. The polypeptide is Protein nucleotidyltransferase YdiU (Geobacillus kaustophilus (strain HTA426)).